The chain runs to 371 residues: tRNA-specific 2-thiouridylase MnmA (371 aa).

ATP is bound by residues 13–20 (GMSGGVDS) and M39. Residues 99–101 (NPD) form an interaction with target base in tRNA region. The active-site Nucleophile is the C104. A disulfide bridge links C104 with C200. Residue G128 coordinates ATP. The segment at 150 to 152 (KDQ) is interaction with tRNA. Residue C200 is the Cysteine persulfide intermediate of the active site. The interval 308–309 (RY) is interaction with tRNA.

It belongs to the MnmA/TRMU family.

The protein resides in the cytoplasm. The catalysed reaction is S-sulfanyl-L-cysteinyl-[protein] + uridine(34) in tRNA + AH2 + ATP = 2-thiouridine(34) in tRNA + L-cysteinyl-[protein] + A + AMP + diphosphate + H(+). Catalyzes the 2-thiolation of uridine at the wobble position (U34) of tRNA, leading to the formation of s(2)U34. This chain is tRNA-specific 2-thiouridylase MnmA, found in Bacillus cereus (strain ATCC 10987 / NRS 248).